The following is a 170-amino-acid chain: Protein-export protein SecB (170 aa).

This sequence belongs to the SecB family. Homotetramer, a dimer of dimers. One homotetramer interacts with 1 SecA dimer.

Its subcellular location is the cytoplasm. Functionally, one of the proteins required for the normal export of preproteins out of the cell cytoplasm. It is a molecular chaperone that binds to a subset of precursor proteins, maintaining them in a translocation-competent state. It also specifically binds to its receptor SecA. This chain is Protein-export protein SecB, found in Pasteurella multocida (strain Pm70).